The sequence spans 777 residues: Spastin (777 aa).

Low complexity-rich tracts occupy residues 1–24, 51–76, and 85–94; these read MVRTKSSSSSASSSSQKSPIKSNN, HAHSNNSNVSSSSRRAATATSGSSSP, and DDLTPTGSSP. The disordered stretch occupies residues 1–103; that stretch reads MVRTKSSSSS…PRSCNGRGHS (103 aa). The Cytoplasmic portion of the chain corresponds to 1–116; that stretch reads MVRTKSSSSS…KQNLYVVSFP (116 aa). Residues 1–215 form a required for localization to punctate cytoplasmic foci region; the sequence is MVRTKSSSSS…RALQPLEMAT (215 aa). The segment at residues 117 to 137 is an intramembrane region (helical); that stretch reads IIFLFNVLRSLIYQLFCIFRY. At 138 to 777 the chain is on the cytoplasmic side; sequence LYGASTKVLY…WSQDYGDITI (640 aa). Residues 213–777 form a sufficient for interaction with microtubules and microtubule severing region; it reads MATNRPGGGY…WSQDYGDITI (565 aa). The MIT domain occupies 238–313; that stretch reads HRRAFEYISK…SMARDRLHFL (76 aa). A disordered region spans residues 327–474; the sequence is LKEKQPAPKQ…SSGSGASTPM (148 aa). Composition is skewed to polar residues over residues 372-389, 406-425, and 444-460; these read QNGTSSSRPAPSGQTATG, PVTNKSQTLPRNLGSKTTVG, and QFSSGRNTPPQRSRTPI. Residues 461–471 are compositionally biased toward low complexity; that stretch reads NNNASSGSGAS. The required for interaction with microtubules stretch occupies residues 462 to 474; it reads NNASSGSGASTPM. 542 to 549 provides a ligand contact to ATP; sequence GPPGNGKT.

The protein belongs to the AAA ATPase family. Spastin subfamily. Homohexamer. The homohexamer is stabilized by ATP-binding. The homohexamer may adopt a ring conformation through which microtubules pass prior to being severed. Interacts with microtubules. Interacts with atl; may be involved in microtubule dynamics.

The protein localises to the membrane. It localises to the cytoplasm. It is found in the cytoskeleton. The protein resides in the microtubule organizing center. Its subcellular location is the centrosome. The protein localises to the chromosome. It localises to the lipid droplet. The enzyme catalyses n ATP + n H2O + a microtubule = n ADP + n phosphate + (n+1) alpha/beta tubulin heterodimers.. Functionally, ATP-dependent microtubule severing protein. Stimulates microtubule minus-end depolymerization and poleward microtubule flux in the mitotic spindle. Regulates microtubule stability in the neuromuscular junction synapse. Involved in lipid metabolism by regulating the size and distribution of lipid droplets. Involved in axon regeneration by regulating microtubule severing. This chain is Spastin, found in Drosophila willistoni (Fruit fly).